The primary structure comprises 1225 residues: DNA-directed RNA polymerase subunit beta' (1225 aa).

Zn(2+) is bound by residues Cys60, Cys62, Cys75, and Cys78. Residues Asp450, Asp452, and Asp454 each coordinate Mg(2+). 4 residues coordinate Zn(2+): Cys818, Cys892, Cys899, and Cys902.

This sequence belongs to the RNA polymerase beta' chain family. The RNAP catalytic core consists of 2 alpha, 1 beta, 1 beta' and 1 omega subunit. When a sigma factor is associated with the core the holoenzyme is formed, which can initiate transcription. It depends on Mg(2+) as a cofactor. The cofactor is Zn(2+).

It carries out the reaction RNA(n) + a ribonucleoside 5'-triphosphate = RNA(n+1) + diphosphate. Functionally, DNA-dependent RNA polymerase catalyzes the transcription of DNA into RNA using the four ribonucleoside triphosphates as substrates. This chain is DNA-directed RNA polymerase subunit beta', found in Streptococcus pneumoniae (strain Hungary19A-6).